Reading from the N-terminus, the 161-residue chain is SsrA-binding protein (161 aa).

The interval methionine 1–serine 23 is disordered.

The protein belongs to the SmpB family.

The protein resides in the cytoplasm. Functionally, required for rescue of stalled ribosomes mediated by trans-translation. Binds to transfer-messenger RNA (tmRNA), required for stable association of tmRNA with ribosomes. tmRNA and SmpB together mimic tRNA shape, replacing the anticodon stem-loop with SmpB. tmRNA is encoded by the ssrA gene; the 2 termini fold to resemble tRNA(Ala) and it encodes a 'tag peptide', a short internal open reading frame. During trans-translation Ala-aminoacylated tmRNA acts like a tRNA, entering the A-site of stalled ribosomes, displacing the stalled mRNA. The ribosome then switches to translate the ORF on the tmRNA; the nascent peptide is terminated with the 'tag peptide' encoded by the tmRNA and targeted for degradation. The ribosome is freed to recommence translation, which seems to be the essential function of trans-translation. This is SsrA-binding protein from Hyphomonas neptunium (strain ATCC 15444).